A 31-amino-acid polypeptide reads, in one-letter code: U14-ctenitoxin-Co1a (31 aa).

In terms of processing, disulfide bonds are present. As to expression, expressed by the venom gland.

The protein localises to the secreted. Its function is as follows. Omega-agatoxins are antagonists of voltage-gated calcium channels (Cav). In Ctenus ornatus (Brazilian spider), this protein is U14-ctenitoxin-Co1a.